The primary structure comprises 533 residues: Basal body-orientation factor 1 (533 aa).

Residues 1 to 30 (MPAKDKRKDKRKDKRKGKNKGKEPKKIIKS) are disordered. A compositionally biased stretch (basic residues) spans 7–19 (RKDKRKDKRKGKN). The segment covering 20–30 (KGKEPKKIIKS) has biased composition (basic and acidic residues). Coiled coils occupy residues 34–207 (AIER…EAEK) and 246–368 (LKEA…VEQF). Residues 277-533 (VKEKIMQLTQ…PQGLQDSDIA (257 aa)) form an interaction with MNS1 and ODF2 region. Residues 507–517 (QQAPVSDSNRM) are compositionally biased toward polar residues. The segment at 507–533 (QQAPVSDSNRMVSPDVIPQGLQDSDIA) is disordered.

The protein belongs to the BBOF1 family. In terms of assembly, interacts with MNS1 and ODF2. Expressed exclusively in the testis and predominantly expressed in male germ cells.

It is found in the cytoplasm. It localises to the cytoskeleton. The protein resides in the cilium basal body. The protein localises to the flagellum axoneme. Its function is as follows. Plays an essential role in sperm motility and male fertility by stabilizing the sperm flagellar axonemal structure. May be required for the stability of ODF2 and MANS1 proteins. Dispensable for the assembly and function of motile cilia. The protein is Basal body-orientation factor 1 of Mus musculus (Mouse).